Reading from the N-terminus, the 61-residue chain is MDPNCSCAAGGSCTCAGSCKCKDCKCTSCKKSCCSCCPVGCAKCAQGCICKGASDKCSCCA.

Position 1 is an N-acetylmethionine (methionine 1). The beta stretch occupies residues 1–29 (MDPNCSCAAGGSCTCAGSCKCKDCKCTSC). A divalent metal cation-binding residues include cysteine 5, cysteine 7, cysteine 13, cysteine 15, cysteine 19, cysteine 21, cysteine 24, cysteine 26, cysteine 29, cysteine 33, cysteine 34, cysteine 36, cysteine 37, cysteine 41, cysteine 44, cysteine 48, cysteine 50, and cysteine 57. An alpha region spans residues 30–61 (KKSCCSCCPVGCAKCAQGCICKGASDKCSCCA). Serine 58 carries the phosphoserine modification. The a divalent metal cation site is built by cysteine 59 and cysteine 60.

It belongs to the metallothionein superfamily. Type 1 family. Interacts with EOLA1.

Metallothioneins have a high content of cysteine residues that bind various heavy metals; these proteins are transcriptionally regulated by both heavy metals and glucocorticoids. This chain is Metallothionein-2A (MT2A), found in Sus scrofa (Pig).